We begin with the raw amino-acid sequence, 242 residues long: DNA repair protein RecO (242 aa).

It belongs to the RecO family. Monomer.

Functionally, involved in DNA repair and RecF pathway recombination. This Salmonella dublin (strain CT_02021853) protein is DNA repair protein RecO.